Here is a 65-residue protein sequence, read N- to C-terminus: Large ribosomal subunit protein bL35 (65 aa).

The tract at residues 1–26 is disordered; that stretch reads MPKMKTNKSAQKRFKKTGSGRFKCKQ. Residues 10-26 are compositionally biased toward basic residues; sequence AQKRFKKTGSGRFKCKQ.

The protein belongs to the bacterial ribosomal protein bL35 family.

The sequence is that of Large ribosomal subunit protein bL35 from Hydrogenovibrio crunogenus (strain DSM 25203 / XCL-2) (Thiomicrospira crunogena).